A 444-amino-acid polypeptide reads, in one-letter code: C4-dicarboxylate transport protein (444 aa).

9 consecutive transmembrane segments (helical) span residues 17–37 (PFYT…ILLG), 57–77 (LVKM…IAGM), 92–112 (LYFL…ANVV), 139–159 (EQSI…GAFA), 161–181 (GDIL…AMVG), 201–221 (LVAI…AFTI), 234–254 (MLIG…LGAV), 320–340 (IYMT…LSWG), and 368–388 (AATL…ILGI).

This sequence belongs to the dicarboxylate/amino acid:cation symporter (DAACS) (TC 2.A.23) family.

Its subcellular location is the cell inner membrane. Its function is as follows. Responsible for the transport of dicarboxylates such as succinate, fumarate, and malate from the periplasm across the membrane. The protein is C4-dicarboxylate transport protein of Rhizobium johnstonii (strain DSM 114642 / LMG 32736 / 3841) (Rhizobium leguminosarum bv. viciae).